The primary structure comprises 42 residues: Large ribosomal subunit protein P2 (42 aa).

The protein belongs to the eukaryotic ribosomal protein P1/P2 family. As to quaternary structure, P1 and P2 exist as dimers at the large ribosomal subunit. In terms of processing, phosphorylated.

Its function is as follows. Plays an important role in the elongation step of protein synthesis. This chain is Large ribosomal subunit protein P2, found in Triticum aestivum (Wheat).